A 451-amino-acid chain; its full sequence is UDP-N-acetylmuramoylalanine--D-glutamate ligase (451 aa).

119 to 125 serves as a coordination point for ATP; sequence GSNGKTT.

This sequence belongs to the MurCDEF family.

Its subcellular location is the cytoplasm. The catalysed reaction is UDP-N-acetyl-alpha-D-muramoyl-L-alanine + D-glutamate + ATP = UDP-N-acetyl-alpha-D-muramoyl-L-alanyl-D-glutamate + ADP + phosphate + H(+). Its pathway is cell wall biogenesis; peptidoglycan biosynthesis. In terms of biological role, cell wall formation. Catalyzes the addition of glutamate to the nucleotide precursor UDP-N-acetylmuramoyl-L-alanine (UMA). The protein is UDP-N-acetylmuramoylalanine--D-glutamate ligase of Geobacillus kaustophilus (strain HTA426).